A 97-amino-acid chain; its full sequence is uncharacterized protein (97 aa).

This is an uncharacterized protein from Shigella flexneri.